Here is a 118-residue protein sequence, read N- to C-terminus: Ribulose bisphosphate carboxylase small subunit (118 aa).

The protein belongs to the RuBisCO small chain family. Heterohexadecamer of 8 large and 8 small subunits.

The protein localises to the carboxysome. In terms of biological role, ruBisCO catalyzes two reactions: the carboxylation of D-ribulose 1,5-bisphosphate, the primary event in carbon dioxide fixation, as well as the oxidative fragmentation of the pentose substrate in the photorespiration process. Both reactions occur simultaneously and in competition at the same active site. Although the small subunit is not catalytic it is essential for maximal activity. The protein is Ribulose bisphosphate carboxylase small subunit of Thermosynechococcus vestitus (strain NIES-2133 / IAM M-273 / BP-1).